The chain runs to 888 residues: MLKNPFKKKSIADKYQTLIREINALESTVKTLTDGELRNKTNQLKQRYQDEQNLNNLIVESFALTREASYRTLGLRHFDVQLIGGLVLNGGKIAEMRTGEGKTLVATLPAYLNALTKKGVHIVTVNEYLASRDQTSMGQIYRFLGLETGLIQEKMTTPERQRNYKADITYVTNNELGFDYLRDNLALNIRDVFLRPFNYCIVDEVDSVLIDEALTPLIIANSVKTCVDKYIIASEITDYLELNVHFEIDEKNKSVLLTNQGTIQIEKILGVQDLYNPRDPWIPYVINAIRASSLFFRDVHYIVQNNRIVIVDEFTGRIMPDRRWRHGLHQAVEAKENVAIRQTTEITASITYQNFFLVYPKLSGMTGTAKTAEVEFDKIYSLPVEEIPTARPNLRQDLPDLIYKDEFSKWNAIAKECQNISLVKQPILIGTTTVEKSEMLAQLLQEYRLSHQILNAKPENVRRESEIVAQAGKKGSITIATNMAGRGTDIILGGNIQFKVRKDLYNILVTYKYQTKENKKDSLSRSLQIFPLLKKLQRTSQKFLTVLNCLINNKQFLNLSDVEVLKILNESELIRVPKISYQCSMKFLINELVNFEKKTQKLDNVIVKNLGGLYIIGTERNDSQRIDNQLRGRCGRQGDPGKSRFFLSVEDKLIRLFGDARLENVLKSQLLDDLPLESELVTKILDSAQKRVEERNYELRKNLFDYDDILNKQRNVVYYERRKVLESESARIKILAYGEQVISEITSKLRRKKVFGSQLISRIRNLLGTKFLLNFPSSDLNNLESIDFQTYLLQEFWLSYESKILELEVEYPGIIQEFERTLILIYMDREWKEHLQKMSLLRDAVGWRKYGQRNPLSEYKEDAYKLFKYRGIVTRHLVIYELLRSSIL.

Residues Q81, 99–103 (GEGKT), and D489 each bind ATP.

It belongs to the SecA family.

It localises to the plastid. Its subcellular location is the chloroplast stroma. It is found in the chloroplast thylakoid membrane. It catalyses the reaction ATP + H2O + cellular proteinSide 1 = ADP + phosphate + cellular proteinSide 2.. In terms of biological role, has a central role in coupling the hydrolysis of ATP to the transfer of proteins across the thylakoid membrane. This Trieres chinensis (Marine centric diatom) protein is Protein translocase subunit SecA.